We begin with the raw amino-acid sequence, 181 residues long: Putative D-tyrosyl-tRNA(Tyr) deacylase 2 (181 aa).

Belongs to the DTD family. Highly divergent. Homodimer.

Its subcellular location is the cytoplasm. Functionally, may hydrolyze D-tyrosyl-tRNA(Tyr) into D-tyrosine and free tRNA(Tyr). Could be a defense mechanism against a harmful effect of D-tyrosine. This chain is Putative D-tyrosyl-tRNA(Tyr) deacylase 2, found in Leishmania major.